The primary structure comprises 356 residues: UDP-N-acetylglucosamine--N-acetylmuramyl-(pentapeptide) pyrophosphoryl-undecaprenol N-acetylglucosamine transferase (356 aa).

UDP-N-acetyl-alpha-D-glucosamine-binding positions include 12 to 14, Arg166, Ser196, and Gln291; that span reads TAG.

Belongs to the glycosyltransferase 28 family. MurG subfamily.

Its subcellular location is the cell membrane. It catalyses the reaction di-trans,octa-cis-undecaprenyl diphospho-N-acetyl-alpha-D-muramoyl-L-alanyl-D-glutamyl-meso-2,6-diaminopimeloyl-D-alanyl-D-alanine + UDP-N-acetyl-alpha-D-glucosamine = di-trans,octa-cis-undecaprenyl diphospho-[N-acetyl-alpha-D-glucosaminyl-(1-&gt;4)]-N-acetyl-alpha-D-muramoyl-L-alanyl-D-glutamyl-meso-2,6-diaminopimeloyl-D-alanyl-D-alanine + UDP + H(+). It functions in the pathway cell wall biogenesis; peptidoglycan biosynthesis. Its function is as follows. Cell wall formation. Catalyzes the transfer of a GlcNAc subunit on undecaprenyl-pyrophosphoryl-MurNAc-pentapeptide (lipid intermediate I) to form undecaprenyl-pyrophosphoryl-MurNAc-(pentapeptide)GlcNAc (lipid intermediate II). The protein is UDP-N-acetylglucosamine--N-acetylmuramyl-(pentapeptide) pyrophosphoryl-undecaprenol N-acetylglucosamine transferase of Geobacillus thermodenitrificans (strain NG80-2).